The sequence spans 147 residues: Protein LOL4 (147 aa).

3 putative zinc finger regions span residues 4 to 34 (QLICSGCRRVVQYRRGVAGVCCPGCNTLTAV), 44 to 74 (ELICSGCPTLLFYNRGASNIRCPSCNRLNST), and 82 to 112 (HLTCGQCRTTLMHPPGASTVQCATCRYVNHV).

The protein resides in the nucleus. Its function is as follows. Putative zinc finger that may be involved in programmed cell death and defense response. In Oryza sativa subsp. japonica (Rice), this protein is Protein LOL4 (LOL4).